We begin with the raw amino-acid sequence, 139 residues long: Nucleoside diphosphate kinase (139 aa).

Residues Lys-10, Phe-58, Arg-86, Thr-92, Arg-103, and Asn-113 each contribute to the ATP site. Catalysis depends on His-116, which acts as the Pros-phosphohistidine intermediate.

Belongs to the NDK family. As to quaternary structure, homotetramer. It depends on Mg(2+) as a cofactor.

It localises to the cytoplasm. The catalysed reaction is a 2'-deoxyribonucleoside 5'-diphosphate + ATP = a 2'-deoxyribonucleoside 5'-triphosphate + ADP. It carries out the reaction a ribonucleoside 5'-diphosphate + ATP = a ribonucleoside 5'-triphosphate + ADP. Its function is as follows. Major role in the synthesis of nucleoside triphosphates other than ATP. The ATP gamma phosphate is transferred to the NDP beta phosphate via a ping-pong mechanism, using a phosphorylated active-site intermediate. The chain is Nucleoside diphosphate kinase from Phenylobacterium zucineum (strain HLK1).